The sequence spans 164 residues: MSEPAGDVRQNPCGSKACRRLFGPVDSEQLSRDCDALMAGCIQEARERWNFDFVTETPLEGDFAWERVRGLGLPKLYLPTGPRRGRDELGGGRRPGTSPALLQGTAEEDHVDLSLSCTLVPRSGEQAEGSPGGPGDSQGRKRRQTSMTDFYHSKRRLIFSKRKP.

The residue at position 2 (Ser-2) is an N-acetylserine. A Glycyl serine ester (Ser-Gly) (interchain with G-Cter in ubiquitin) cross-link involves residue Ser-2. Residues 13-41 (CGSKACRRLFGPVDSEQLSRDCDALMAGC) form a C4-type zinc finger. Residues 17–24 (ACRRLFGP) form a required for binding cyclins region. The required for binding CDKs stretch occupies residues 53–58 (FVTETP). The segment at 76 to 164 (LYLPTGPRRG…RRLIFSKRKP (89 aa)) is disordered. Thr-80 is subject to Phosphothreonine; by LKB1. The residue at position 114 (Ser-114) is a Phosphoserine; by GSK3-beta. The residue at position 130 (Ser-130) is a Phosphoserine. A PIP-box K+4 motif motif is present at residues 140-164 (RKRRQTSMTDFYHSKRRLIFSKRKP). The short motif at 141 to 156 (KRRQTSMTDFYHSKRR) is the Nuclear localization signal element. Phosphothreonine; by PKA, PKB/AKT1, PIM1 and PIM2 is present on Thr-145. Residue Ser-146 is modified to Phosphoserine; by PKC and NUAK1. Residues 152 to 164 (HSKRRLIFSKRKP) form an interaction with TRIM39 region. Residues 153 to 164 (SKRRLIFSKRKP) are compositionally biased toward basic residues. Ser-160 carries the phosphoserine; by PKC; in vitro modification.

Belongs to the CDI family. As to quaternary structure, interacts with HDAC1; the interaction is prevented by competitive binding of C10orf90/FATS to HDAC1 facilitating acetylation and protein stabilization of CDKN1A/p21. Interacts with MKRN1. Interacts with PSMA3. Interacts with PCNA. Component of the ternary complex, cyclin D-CDK4-CDKN1A. Interacts (via its N-terminal domain) with CDK4; the interaction promotes the assembly of the cyclin D-CDK4 complex, its nuclear translocation and promotes the cyclin D-dependent enzyme activity of CDK4. Binding to CDK2 leads to CDK2/cyclin E inactivation at the G1-S phase DNA damage checkpoint, thereby arresting cells at the G1-S transition during DNA repair. Interacts with PIM1. Interacts with STK11 and NUAK1. Interacts wih DTL. Interacts with isoform 1 and isoform 2 of TRIM39. Interacts with PKP3; the interaction sequesters CDKN1A to the cytoplasm thereby repressing its role as an inhibitor of CDK4- and CDK6-driven RB1 phosphorylation. Phosphorylation of Thr-145 by Akt or of Ser-146 by PKC impairs binding to PCNA. Phosphorylation at Ser-114 by GSK3-beta enhances ubiquitination by the DCX(DTL) complex. Phosphorylation of Thr-145 by PIM2 enhances CDKN1A stability and inhibits cell proliferation. Phosphorylation of Thr-145 by PIM1 results in the relocation of CDKN1A to the cytoplasm and enhanced CDKN1A protein stability. UV radiation-induced phosphorylation at Thr-80 by LKB1 and at Ser-146 by NUAK1 leads to its degradation. In terms of processing, ubiquitinated by MKRN1; leading to polyubiquitination and 26S proteasome-dependent degradation. Ubiquitinated by the DCX(DTL) complex, also named CRL4(CDT2) complex, leading to its degradation during S phase or following UV irradiation. Ubiquitination by the DCX(DTL) complex is essential to control replication licensing and is PCNA-dependent: interacts with PCNA via its PIP-box, while the presence of the containing the 'K+4' motif in the PIP box, recruit the DCX(DTL) complex, leading to its degradation. Ubiquitination at Ser-2 leads to degradation by the proteasome pathway. Ubiquitinated by RNF114; leading to proteasomal degradation. Post-translationally, acetylation leads to protein stability. Acetylated in vitro on Lys-141, Lys-154, Lys-161 and Lys-163. Deacetylation by HDAC1 is prevented by competitive binding of C10orf90/FATS to HDAC1. Expressed in all adult tissues, with 5-fold lower levels observed in the brain.

The protein localises to the cytoplasm. Its subcellular location is the nucleus. Plays an important role in controlling cell cycle progression and DNA damage-induced G2 arrest. Involved in p53/TP53 mediated inhibition of cellular proliferation in response to DNA damage. Also involved in p53-independent DNA damage-induced G2 arrest mediated by CREB3L1 in astrocytes and osteoblasts. Binds to and inhibits cyclin-dependent kinase activity, preventing phosphorylation of critical cyclin-dependent kinase substrates and blocking cell cycle progression. Functions in the nuclear localization and assembly of cyclin D-CDK4 complex and promotes its kinase activity towards RB1. At higher stoichiometric ratios, inhibits the kinase activity of the cyclin D-CDK4 complex. Inhibits DNA synthesis by DNA polymerase delta by competing with POLD3 for PCNA binding. Negatively regulates the CDK4- and CDK6-driven phosphorylation of RB1 in keratinocytes, thereby resulting in the release of E2F1 and subsequent transcription of E2F1-driven G1/S phase promoting genes. This Homo sapiens (Human) protein is Cyclin-dependent kinase inhibitor 1.